Reading from the N-terminus, the 621-residue chain is (-)-beta-phellandrene synthase 1, chloroplastic (621 aa).

The transit peptide at 1–49 directs the protein to the chloroplast; that stretch reads MALALVSVAPLVSMRRSLFSSPYELKSIDKTIPNLVMCRKRMSGTPSIR. Positions 372, 376, and 524 each coordinate Mg(2+). Positions 372 to 376 match the DDXXD motif motif; it reads DDIYD.

The protein belongs to the terpene synthase family. Tpsd subfamily. It depends on Mg(2+) as a cofactor. Mn(2+) is required as a cofactor.

The protein localises to the plastid. The protein resides in the chloroplast. It carries out the reaction (2E)-geranyl diphosphate = (-)-beta-phellandrene + diphosphate. Its pathway is terpene metabolism; oleoresin biosynthesis. It functions in the pathway secondary metabolite biosynthesis; terpenoid biosynthesis. Its function is as follows. Monoterpene synthase (TPS) involved in the biosynthesis of monoterpene natural products included in conifer oleoresin secretions and volatile emissions; these compounds contribute to biotic and abiotic stress defense against herbivores and pathogens. Catalyzes the conversion of (2E)-geranyl diphosphate (GPP) to (-)-beta-phellandrene and, to a lower extent, to (-)-alpha-phellandrene. This Pinus contorta (Shore pine) protein is (-)-beta-phellandrene synthase 1, chloroplastic.